We begin with the raw amino-acid sequence, 737 residues long: Serine/threonine-protein kinase dst1 (737 aa).

The Protein kinase domain maps to 29-281 (YHIQERLGKG…AKELLNHEFI (253 aa)). Residues 35-43 (LGKGSFGQV) and K58 each bind ATP. Catalysis depends on D149, which acts as the Proton acceptor. 4 disordered regions span residues 305-356 (SMFE…SNNY), 372-475 (KDDA…TTDQ), 491-559 (KPIT…ISNN), and 575-631 (NNNI…ESLS). Low complexity-rich tracts occupy residues 334 to 345 (NNNTVTNYSTVI), 401 to 410 (SSCSSSSSSS), 425 to 444 (PITN…NKIP), and 454 to 473 (ATTT…STTT). Residues 491-503 (KPITSSNSTSVTP) show a composition bias toward polar residues. Positions 510-525 (SNNTTTTSNINTPIKP) are enriched in low complexity. Polar residues-rich tracts occupy residues 529–554 (LKKS…TPLK) and 585–596 (SPTTGQKIIKTN). Residues 597–615 (SGGVLKSSGGLSSKRSPSS) are compositionally biased toward low complexity.

This sequence belongs to the protein kinase superfamily. STE Ser/Thr protein kinase family. STE20 subfamily. Mg(2+) is required as a cofactor.

The enzyme catalyses L-seryl-[protein] + ATP = O-phospho-L-seryl-[protein] + ADP + H(+). The catalysed reaction is L-threonyl-[protein] + ATP = O-phospho-L-threonyl-[protein] + ADP + H(+). This chain is Serine/threonine-protein kinase dst1, found in Dictyostelium discoideum (Social amoeba).